The following is a 177-amino-acid chain: Inner membrane protein p22 (177 aa).

At Met-1 to Thr-7 the chain is on the intravirion side. Residues Ile-8–Tyr-28 traverse the membrane as a helical segment. Topologically, residues Tyr-29 to Ala-177 are virion surface.

The protein belongs to the asfivirus inner membrane protein p22 family.

Its subcellular location is the virion membrane. The protein resides in the host cell membrane. This chain is Inner membrane protein p22, found in African swine fever virus (isolate Warthog/Namibia/Wart80/1980) (ASFV).